The chain runs to 899 residues: Bifunctional uridylyltransferase/uridylyl-removing enzyme (899 aa).

The segment at 1–342 is uridylyltransferase; that stretch reads MPQMDPELFD…RAGESGPATP (342 aa). Residues 343-705 are uridylyl-removing; sequence LNSRFQVRDG…TTQREFEGGT (363 aa). The HD domain occupies 461 to 583; the sequence is VDAHTLNLIK…VGDQTHLDYL (123 aa). ACT domains are found at residues 706–784 and 816–897; these read QIFI…DEYP and ILEL…SLQI.

This sequence belongs to the GlnD family. It depends on Mg(2+) as a cofactor.

The catalysed reaction is [protein-PII]-L-tyrosine + UTP = [protein-PII]-uridylyl-L-tyrosine + diphosphate. The enzyme catalyses [protein-PII]-uridylyl-L-tyrosine + H2O = [protein-PII]-L-tyrosine + UMP + H(+). With respect to regulation, uridylyltransferase (UTase) activity is inhibited by glutamine, while glutamine activates uridylyl-removing (UR) activity. In terms of biological role, modifies, by uridylylation and deuridylylation, the PII regulatory proteins (GlnB and homologs), in response to the nitrogen status of the cell that GlnD senses through the glutamine level. Under low glutamine levels, catalyzes the conversion of the PII proteins and UTP to PII-UMP and PPi, while under higher glutamine levels, GlnD hydrolyzes PII-UMP to PII and UMP (deuridylylation). Thus, controls uridylylation state and activity of the PII proteins, and plays an important role in the regulation of nitrogen assimilation and metabolism. The polypeptide is Bifunctional uridylyltransferase/uridylyl-removing enzyme (Ectopseudomonas mendocina (strain ymp) (Pseudomonas mendocina)).